The primary structure comprises 532 residues: MTDDIAPSGYQPHRISTLAVLIGFIALLTAWLRRDRRLASIPGPRTYPLVGLGYKLPPKAPALFRKWAMEYGDVFRIRVGWYDWVVINSPEAIAEILEKQAVKTSSKAPSPLGHDVVTGGNRMPTMPYGKEWRNLRSVVRQITTVPMTASFVPSQEFEAKQLLFDLATDNENQRNFYQHMRRYAFSIIMTNTFGTRVKSWDHPDAQNAVRSQAVLRRTSRPGAFLVDELPPLARLPKXXXXXXXXXXXAAKVETGKAPHCYAREIYESRESWYAKGATEEQLAWVSGGLVEAGFETTAGTLNSLVLYLAANPQVQKTAQEELMRAVGPHRLPTFEDTRRLPYIRACVKEVLRMNPILSPGIRHYADEDVVYKEHVIPKGTVLLANTAYLHYDPRRYKDPQKFMPERYLDHPLYSSDYAAMTDPSRRDHFTFSTGRRTCPGARLAENSLTIALAGMLWAFEIRPGLVDGVETEVDMSDDAYLDTGFTLPKPFAARFLPWSEERLQIVKEQWELASKKGYELRGVPVDIEGMTK.

Residues 15–32 (ISTLAVLIGFIALLTAWL) traverse the membrane as a helical segment. Position 438 (Cys-438) interacts with heme.

It belongs to the cytochrome P450 family. Heme serves as cofactor.

The protein localises to the membrane. Its pathway is pigment biosynthesis. It participates in secondary metabolite biosynthesis. In terms of biological role, cytochrome P450 monooxygenase; part of the gene cluster that mediates the biosynthesis of pleosporalin A, ascomycone A, as well as a third cryptic naphthoquinone derived pigment, all responsible for the coloration of conidia. Involved in the oxidation of fusarubinaldehyde at C-9. PgmC has low substrate-specificity and is also able to use the pgmA product 3-acetonyl-1,6,8-trihydroxy-2-naphthaldehyde as a substrate. The pathway begins with the biosynthesis of the cyclized heptaketide 3-acetonyl-1,6,8-trihydroxy-2-naphthaldehyde by the NR-PKS pgmA. The C-6 hydroxyl group is further methylated by the O-methyltransferase pgmB to yield fusarubinaldehyde which is in turn oxidized by the cytochrome P450 monooxygenase pgmC at C-9. The C-1 hydroxyl group is then methylated spontaneously. Although pgmE, pgmD and pgmH are essential for the production of pleosporalin A, it is not the case for the 2 other final products and it remains difficult to assign a specific function to each enzyme. PgmF and pgmG seem not to be involved in pigment biosynthesis although they were regulated by the cluster-specific transcription factor pgmR. This Aspergillus terreus (strain NIH 2624 / FGSC A1156) protein is Cytochrome P450 monooxygenase pgmC.